Consider the following 308-residue polypeptide: MKHYEVEILDAKTREKLCFLDKVEPQATIAEIKNLFTKTHPQWYPARQSLRLDPKGKSLKDEDVLQKLPVGTTATLYFRDLGAQISWVTVFLTEYAGPLFIYLLFYFRVPFIYGRKYDFTSSRHTVVHLACICHSFHYIKRLLETLFVHRFSHGTMPLRNIFKNCTYYWGFAAWMAYYINHPLYTPPTYGAQQVKLALAIFVICQLGNFSIHMALRDLRPAGSKTRKIPYPTRNPFTWLFLLVSCPNYTYEVGSWIGFAIMTQCLPVALFSLVGFTQMTIWAKGKHRSYLKEFRDYPPLRMPIIPFLL.

The Cytoplasmic segment spans residues 1–86; sequence MKHYEVEILD…YFRDLGAQIS (86 aa). K22 is subject to N6-acetyllysine. Position 58 is a phosphoserine (S58). The residue at position 60 (K60) is an N6-acetyllysine. The chain crosses the membrane as a helical span at residues 87-106; the sequence is WVTVFLTEYAGPLFIYLLFY. The Lumenal segment spans residues 107 to 124; sequence FRVPFIYGRKYDFTSSRH. A helical transmembrane segment spans residues 125–147; sequence TVVHLACICHSFHYIKRLLETLF. Over 148–158 the chain is Cytoplasmic; sequence VHRFSHGTMPL. The helical transmembrane segment at 159–180 threads the bilayer; it reads RNIFKNCTYYWGFAAWMAYYIN. Residues 181 to 189 lie on the Lumenal side of the membrane; it reads HPLYTPPTY. Residues 190-216 form a helical membrane-spanning segment; the sequence is GAQQVKLALAIFVICQLGNFSIHMALR. At 217 to 245 the chain is on the cytoplasmic side; it reads DLRPAGSKTRKIPYPTRNPFTWLFLLVSC. The chain crosses the membrane as a helical span at residues 246 to 262; the sequence is PNYTYEVGSWIGFAIMT. Residues 263 to 264 lie on the Lumenal side of the membrane; sequence QC. The helical transmembrane segment at 265–292 threads the bilayer; sequence LPVALFSLVGFTQMTIWAKGKHRSYLKE. The Cytoplasmic segment spans residues 293–308; that stretch reads FRDYPPLRMPIIPFLL.

It belongs to the steroid 5-alpha reductase family. In terms of assembly, interacts with ELOVL1 and LASS2. Post-translationally, glycosylated.

The protein resides in the endoplasmic reticulum membrane. It catalyses the reaction a very-long-chain 2,3-saturated fatty acyl-CoA + NADP(+) = a very-long-chain (2E)-enoyl-CoA + NADPH + H(+). The catalysed reaction is octadecanoyl-CoA + NADP(+) = (2E)-octadecenoyl-CoA + NADPH + H(+). It carries out the reaction (2E,7Z,10Z,13Z,16Z)-docosapentaenoyl-CoA + NADPH + H(+) = (7Z,10Z,13Z,16Z)-docosatetraenoyl-CoA + NADP(+). The enzyme catalyses (2E,7Z,10Z,13Z,16Z,19Z)-docosahexaenoyl-CoA + NADPH + H(+) = (7Z,10Z,13Z,16Z,19Z)-docosapentaenoyl-CoA + NADP(+). It catalyses the reaction (2E,8Z,11Z,14Z)-eicosatetraenoyl-CoA + NADPH + H(+) = (8Z,11Z,14Z)-eicosatrienoyl-CoA + NADP(+). The catalysed reaction is (2E)-hexadecenoyl-CoA + NADPH + H(+) = hexadecanoyl-CoA + NADP(+). Its pathway is lipid metabolism; fatty acid biosynthesis. The protein operates within lipid metabolism; sphingolipid metabolism. In terms of biological role, involved in both the production of very long-chain fatty acids for sphingolipid synthesis and the degradation of the sphingosine moiety in sphingolipids through the sphingosine 1-phosphate metabolic pathway. Catalyzes the last of the four reactions of the long-chain fatty acids elongation cycle. This endoplasmic reticulum-bound enzymatic process, allows the addition of 2 carbons to the chain of long- and very long-chain fatty acids/VLCFAs per cycle. This enzyme reduces the trans-2,3-enoyl-CoA fatty acid intermediate to an acyl-CoA that can be further elongated by entering a new cycle of elongation. Thereby, it participates in the production of VLCFAs of different chain lengths that are involved in multiple biological processes as precursors of membrane lipids and lipid mediators. Catalyzes the saturation step of the sphingosine 1-phosphate metabolic pathway, the conversion of trans-2-hexadecenoyl-CoA to palmitoyl-CoA. In Bos taurus (Bovine), this protein is Very-long-chain enoyl-CoA reductase (TECR).